The chain runs to 89 residues: Islet amyloid polypeptide (89 aa).

The first 22 residues, 1 to 22 (MCLLKLPVVLIVLLVALHHLKA), serve as a signal peptide directing secretion. A propeptide spanning residues 23 to 31 (TPIESNQVE) is cleaved from the precursor. C35 and C40 form a disulfide bridge. A Tyrosine amide modification is found at Y70. Positions 74–89 (STVDILNREPLNYLPF) are excised as a propeptide.

The protein belongs to the calcitonin family. As to quaternary structure, can form homodimers. Interacts with IDE and INS. Interaction with INS inhibits homodimerization and fibril formation.

The protein localises to the secreted. Amylin/IAPP is a glucoregulatory peptide hormone that plays an important role in the regulation of energy homeostasis. Selectively inhibits insulin-stimulated glucose utilization and glycogen deposition in muscle, while not affecting adipocyte glucose metabolism. IAPP function is mediated by the CALCR-RAMPs (AMYRs) receptor complexes. Amylin can also bind CALCR receptor in the absence of RAMPs, although it is more selective for AMYRs. This Felis catus (Cat) protein is Islet amyloid polypeptide (IAPP).